The following is a 184-amino-acid chain: Flagellar transcriptional regulator FlhC (184 aa).

The Zn(2+) site is built by Cys144, Cys147, Cys163, and Cys166.

Belongs to the FlhC family. Heterohexamer composed of two FlhC and four FlhD subunits. Each FlhC binds a FlhD dimer, forming a heterotrimer, and a hexamer assembles by dimerization of two heterotrimers. Requires Zn(2+) as cofactor.

It localises to the cytoplasm. In terms of biological role, functions in complex with FlhD as a master transcriptional regulator that regulates transcription of several flagellar and non-flagellar operons by binding to their promoter region. Activates expression of class 2 flagellar genes, including fliA, which is a flagellum-specific sigma factor that turns on the class 3 genes. Also regulates genes whose products function in a variety of physiological pathways. The protein is Flagellar transcriptional regulator FlhC of Verminephrobacter eiseniae (strain EF01-2).